We begin with the raw amino-acid sequence, 338 residues long: Large ribosomal subunit protein uL10 (338 aa).

The disordered stretch occupies residues 297-338 (PSAQQTQTQQSTAEEKKEEKKEEEKKGPSEEEIGSGLASLFG). The segment covering 298-308 (SAQQTQTQQST) has biased composition (low complexity). Positions 309-325 (AEEKKEEKKEEEKKGPS) are enriched in basic and acidic residues.

It belongs to the universal ribosomal protein uL10 family. In terms of assembly, part of the 50S ribosomal subunit. Forms part of the ribosomal stalk which helps the ribosome interact with GTP-bound translation factors. Forms a heptameric L10(L12)2(L12)2(L12)2 complex, where L10 forms an elongated spine to which the L12 dimers bind in a sequential fashion.

Its function is as follows. Forms part of the ribosomal stalk, playing a central role in the interaction of the ribosome with GTP-bound translation factors. The protein is Large ribosomal subunit protein uL10 of Saccharolobus islandicus (strain Y.N.15.51 / Yellowstone #2) (Sulfolobus islandicus).